A 118-amino-acid polypeptide reads, in one-letter code: Small ribosomal subunit protein uS13 (118 aa).

The disordered stretch occupies residues 91-118 (HRHSLPVRGQRTKTNARTRKGPRKPIRK).

It belongs to the universal ribosomal protein uS13 family. In terms of assembly, part of the 30S ribosomal subunit. Forms a loose heterodimer with protein S19. Forms two bridges to the 50S subunit in the 70S ribosome.

Functionally, located at the top of the head of the 30S subunit, it contacts several helices of the 16S rRNA. In the 70S ribosome it contacts the 23S rRNA (bridge B1a) and protein L5 of the 50S subunit (bridge B1b), connecting the 2 subunits; these bridges are implicated in subunit movement. Contacts the tRNAs in the A and P-sites. The protein is Small ribosomal subunit protein uS13 of Hahella chejuensis (strain KCTC 2396).